We begin with the raw amino-acid sequence, 101 residues long: Putative septation protein SpoVG (101 aa).

The segment at 82 to 101 (ELKKGGAAPARATGTDPHED) is disordered.

This sequence belongs to the SpoVG family.

Could be involved in septation. This is Putative septation protein SpoVG from Anaeromyxobacter dehalogenans (strain 2CP-1 / ATCC BAA-258).